Here is a 240-residue protein sequence, read N- to C-terminus: tRNA (guanine-N(1)-)-methyltransferase (240 aa).

S-adenosyl-L-methionine-binding positions include glycine 108 and 127–132 (LGDYIL).

The protein belongs to the RNA methyltransferase TrmD family. In terms of assembly, homodimer.

It is found in the cytoplasm. The catalysed reaction is guanosine(37) in tRNA + S-adenosyl-L-methionine = N(1)-methylguanosine(37) in tRNA + S-adenosyl-L-homocysteine + H(+). Specifically methylates guanosine-37 in various tRNAs. The protein is tRNA (guanine-N(1)-)-methyltransferase of Streptococcus sanguinis (strain SK36).